The sequence spans 237 residues: Class B acid phosphatase (237 aa).

The first 23 residues, 1 to 23 (MKKITLALSAVCLLFTLNHSANA), serve as a signal peptide directing secretion. Residue D69 is the Nucleophile of the active site. Mg(2+) is bound by residues D69 and D71. The active-site Proton donor is the D71. Substrate is bound by residues 137–138 (TG) and K177. D192 is a binding site for Mg(2+).

Belongs to the class B bacterial acid phosphatase family. In terms of assembly, homotetramer. Requires Mg(2+) as cofactor.

Its subcellular location is the periplasm. The enzyme catalyses a phosphate monoester + H2O = an alcohol + phosphate. Its activity is regulated as follows. Nucleosides, and particularly 2'-deoxyribonucleosides, are potent inhibitors of the phosphatase activity. The phosphatase activity is also inhibited by inorganic phosphate and EDTA in vitro. In terms of biological role, dephosphorylates several organic phosphate monoesters such as 3'-UMP, 5'-UMP and pNPP. Also has a phosphotransferase activity catalyzing the transfer of low-energy phosphate groups from organic phosphate monoesters to free hydroxyl groups of various organic compounds such as the 2'-, 3-, or 5'-hydroxyls of nucleosides and nucleotides. Also displays significant phosphomutase activity since it is able to catalyze the transfer of the phosphate group of 3'-AMP from the 3'-position both to the 2'- and 5'-positions. One of the physiological functions of the phosphohydrolytic activity of the enzyme is believed to be the scavenging of organic phosphate esters that otherwise cannot pass the cytoplasmic membrane. This is Class B acid phosphatase (aphA) from Salmonella typhimurium (strain LT2 / SGSC1412 / ATCC 700720).